The primary structure comprises 179 residues: tRNA (cytidine(56)-2'-O)-methyltransferase (179 aa).

S-adenosyl-L-methionine-binding positions include Leu82, 112-116 (GAEKV), and 130-137 (VGNQPHSE).

The protein belongs to the aTrm56 family. Homodimer.

The protein localises to the cytoplasm. The catalysed reaction is cytidine(56) in tRNA + S-adenosyl-L-methionine = 2'-O-methylcytidine(56) in tRNA + S-adenosyl-L-homocysteine + H(+). Specifically catalyzes the AdoMet-dependent 2'-O-ribose methylation of cytidine at position 56 in tRNAs. The polypeptide is tRNA (cytidine(56)-2'-O)-methyltransferase (Methanococcus maripaludis (strain C6 / ATCC BAA-1332)).